The sequence spans 387 residues: Patatin-11 (387 aa).

The signal sequence occupies residues 1 to 23 (MATTKSVLVLIFMILATTSSTFA). The region spanning 32–230 (LSTDGGGIKG…TVGDPALLSL (199 aa)) is the PNPLA domain. Residues 36-41 (GGGIKG) carry the GXGXXG motif. The GXSXG signature appears at 75 to 79 (GTSTG). Ser-77 serves as the catalytic Nucleophile. N-linked (GlcNAc...) asparagine glycosylation is present at Asn-115. Asp-216 (proton acceptor) is an active-site residue. Positions 216–218 (DGG) match the DGA/G motif. Residues 322–385 (ENALNGTTTE…DRKKLRANKA (64 aa)) are a coiled coil. Residue Asn-326 is glycosylated (N-linked (GlcNAc...) asparagine).

It belongs to the patatin family. Tuber.

The protein resides in the vacuole. In terms of biological role, probable lipolytic acyl hydrolase (LAH), an activity which is thought to be involved in the response of tubers to pathogens. The protein is Patatin-11 of Solanum tuberosum (Potato).